The following is a 778-amino-acid chain: MSSGSKEGGGGSPAYHLPHPHPHPPQHAQYVGPYRLEKTLGKGQTGLVKLGVHCITGQKVAVKIVNREKLSESVLMKVEREIAILKLIEHPHVLKLHDVYENKKYLYLVLEHVSGGELFDYLVKKGRLTPKEARKFFRQIVSALDFCHSYSICHRDLKPENLLLDEKNNIRIADFGMASLQVGDSLLETSCGSPHYACPEVIKGEKYDGRRADMWSCGVILFALLVGALPFDDDNLRQLLEKVKRGVFHMPHFIPPDCQSLLRGMIEVEPEKRLSLEQIQKHPWYLGGKHEPDPCLEPAPGRRVAMRSLPSNGELDPDVLESMASLGCFRDRERLHRELRSEEENQEKMIYYLLLDRKERYPSCEDQDLPPRNDVDPPRKRVDSPMLSRHGKRRPERKSMEVLSITDAGSGGSPVPTRRALEMAQHSQRSRSVSGASTGLSSSPLSSPRSPVFSFSPEPGAGDEARGGGSPTSKTQTLPSRGPRGGGAGEQPPPPSARSTPLPGPPGSPRSSGGTPLHSPLHTPRASPTGTPGTTPPPSPGGGVGGAAWRSRLNSIRNSFLGSPRFHRRKMQVPTAEEMSSLTPESSPELAKRSWFGNFISLDKEEQIFLVLKDKPLSSIKADIVHAFLSIPSLSHSVLSQTSFRAEYKASGGPSVFQKPVRFQVDISSSEGPEPSPRRDGSSGGGIYSVTFTLISGPSRRFKRVVETIQAQLLSTHDQPSVQALADEKNGAQTRPAGTPPRSLQPPPGRSDPDLSSSPRRGPPKDKKLLATNGTPLP.

Residues 1–12 (MSSGSKEGGGGS) are compositionally biased toward gly residues. Residues 1-29 (MSSGSKEGGGGSPAYHLPHPHPHPPQHAQ) form a disordered region. The 252-residue stretch at 34 to 285 (YRLEKTLGKG…LEQIQKHPWY (252 aa)) folds into the Protein kinase domain. Residues 40–48 (LGKGQTGLV) and lysine 63 each bind ATP. Aspartate 156 acts as the Proton acceptor in catalysis. Threonine 189 bears the Phosphothreonine; by LKB1 mark. The UBA domain maps to 314-356 (ELDPDVLESMASLGCFRDRERLHRELRSEEENQEKMIYYLLLD). Residues 362–383 (PSCEDQDLPPRNDVDPPRKRVD) are compositionally biased toward basic and acidic residues. Residues 362-548 (PSCEDQDLPP…SPGGGVGGAA (187 aa)) form a disordered region. Phosphoserine is present on residues serine 399, serine 443, serine 447, and serine 450. Over residues 430 to 457 (SRSVSGASTGLSSSPLSSPRSPVFSFSP) the composition is skewed to low complexity. Residues arginine 466, arginine 481, arginine 484, and arginine 498 each carry the omega-N-methylarginine modification. Residues 491-508 (QPPPPSARSTPLPGPPGS) are compositionally biased toward pro residues. The residue at position 508 (serine 508) is a Phosphoserine. The segment covering 509–533 (PRSSGGTPLHSPLHTPRASPTGTPG) has biased composition (low complexity). Arginine 525 is subject to Omega-N-methylarginine. A phosphothreonine mark is found at threonine 529 and threonine 535. Arginine 550 is modified (omega-N-methylarginine). The interval 560 to 588 (FLGSPRFHRRKMQVPTAEEMSSLTPESSP) is disordered. Threonine 583 is modified (phosphothreonine). Phosphoserine occurs at positions 586, 587, and 601. Residues 719–778 (QPSVQALADEKNGAQTRPAGTPPRSLQPPPGRSDPDLSSSPRRGPPKDKKLLATNGTPLP) form a disordered region.

It belongs to the protein kinase superfamily. CAMK Ser/Thr protein kinase family. SNF1 subfamily. Mg(2+) is required as a cofactor. In terms of processing, phosphorylated at Thr-189 by STK11/LKB1 in complex with STE20-related adapter-alpha (STRADA) pseudo kinase and CAB39. Not phosphorylated at Thr-189 by CaMKK2. In contrast, it is phosphorylated and activated by CaMKK1. May be inactivated via dephosphorylation of Thr-189 by PP2C. In terms of tissue distribution, present in the gray matter of the brain and spinal cord (at protein level). Expressed in the nervous system, distributed within the brain and spinal cord of embryonic and postnatal animals.

It localises to the cytoplasm. Its subcellular location is the nucleus. The protein resides in the cytoskeleton. The protein localises to the microtubule organizing center. It is found in the centrosome. It localises to the synapse. Its subcellular location is the presynaptic active zone. The protein resides in the cytoplasmic vesicle. The protein localises to the secretory vesicle. It is found in the synaptic vesicle. The catalysed reaction is L-seryl-[protein] + ATP = O-phospho-L-seryl-[protein] + ADP + H(+). It carries out the reaction L-threonyl-[protein] + ATP = O-phospho-L-threonyl-[protein] + ADP + H(+). The enzyme catalyses L-seryl-[tau protein] + ATP = O-phospho-L-seryl-[tau protein] + ADP + H(+). It catalyses the reaction L-threonyl-[tau protein] + ATP = O-phospho-L-threonyl-[tau protein] + ADP + H(+). With respect to regulation, activated by phosphorylation on Thr-189 by STK11/LKB1. In terms of biological role, serine/threonine-protein kinase that plays a key role in polarization of neurons and centrosome duplication. Phosphorylates CDC25B, CDC25C, MAPT/TAU, RIMS1, TUBG1, TUBG2 and WEE1. Following phosphorylation and activation by STK11/LKB1, acts as a key regulator of polarization of cortical neurons, probably by mediating phosphorylation of microtubule-associated proteins such as MAPT/TAU at 'Thr-504' and 'Ser-554'. Also regulates neuron polarization by mediating phosphorylation of WEE1 at 'Ser-642' in postmitotic neurons, leading to down-regulate WEE1 activity in polarized neurons. In neurons, localizes to synaptic vesicles and plays a role in neurotransmitter release, possibly by phosphorylating RIMS1. Also acts as a positive regulator of centrosome duplication by mediating phosphorylation of gamma-tubulin (TUBG1 and TUBG2) at 'Ser-131', leading to translocation of gamma-tubulin and its associated proteins to the centrosome. Involved in the UV-induced DNA damage checkpoint response, probably by inhibiting CDK1 activity through phosphorylation and activation of WEE1, and inhibition of CDC25B and CDC25C. The sequence is that of Serine/threonine-protein kinase BRSK1 (Brsk1) from Mus musculus (Mouse).